Reading from the N-terminus, the 307-residue chain is N-acetylmuramic acid 6-phosphate etherase (307 aa).

The region spanning 62-225 is the SIS domain; it reads IVLAFQKGAR…TTASMIRIGK (164 aa). The active-site Proton donor is the glutamate 90. The active site involves glutamate 121.

Belongs to the GCKR-like family. MurNAc-6-P etherase subfamily. Homodimer.

It carries out the reaction N-acetyl-D-muramate 6-phosphate + H2O = N-acetyl-D-glucosamine 6-phosphate + (R)-lactate. The protein operates within amino-sugar metabolism; 1,6-anhydro-N-acetylmuramate degradation. It participates in amino-sugar metabolism; N-acetylmuramate degradation. It functions in the pathway cell wall biogenesis; peptidoglycan recycling. Its function is as follows. Specifically catalyzes the cleavage of the D-lactyl ether substituent of MurNAc 6-phosphate, producing GlcNAc 6-phosphate and D-lactate. Together with AnmK, is also required for the utilization of anhydro-N-acetylmuramic acid (anhMurNAc) either imported from the medium or derived from its own cell wall murein, and thus plays a role in cell wall recycling. This chain is N-acetylmuramic acid 6-phosphate etherase, found in Mesorhizobium japonicum (strain LMG 29417 / CECT 9101 / MAFF 303099) (Mesorhizobium loti (strain MAFF 303099)).